Reading from the N-terminus, the 123-residue chain is MKDQGRSPRKRTGGRRRPNHKKKKHELGKDTVETQVGEQRLKTVDSRGNTQKVRAVKTDVASIADGAETIEATIENVVENPSNPNYARRNIITKGAILETSEGQARVTSRPGQHGQVNAVLVE.

The tract at residues 1 to 38 is disordered; that stretch reads MKDQGRSPRKRTGGRRRPNHKKKKHELGKDTVETQVGE. Over residues 7–26 the composition is skewed to basic residues; sequence SPRKRTGGRRRPNHKKKKHE.

As to quaternary structure, part of the 30S ribosomal subunit.

This chain is Small ribosomal subunit protein eS8 (rps8e), found in Haloarcula marismortui (strain ATCC 43049 / DSM 3752 / JCM 8966 / VKM B-1809) (Halobacterium marismortui).